Reading from the N-terminus, the 332-residue chain is Ribosomal RNA small subunit methyltransferase H (332 aa).

S-adenosyl-L-methionine-binding positions include 36–38 (GGH), Asp-61, Phe-88, Asp-114, and Gln-121.

Belongs to the methyltransferase superfamily. RsmH family.

It localises to the cytoplasm. It catalyses the reaction cytidine(1402) in 16S rRNA + S-adenosyl-L-methionine = N(4)-methylcytidine(1402) in 16S rRNA + S-adenosyl-L-homocysteine + H(+). In terms of biological role, specifically methylates the N4 position of cytidine in position 1402 (C1402) of 16S rRNA. This chain is Ribosomal RNA small subunit methyltransferase H, found in Pelodictyon phaeoclathratiforme (strain DSM 5477 / BU-1).